A 217-amino-acid polypeptide reads, in one-letter code: Octanoyltransferase (217 aa).

One can recognise a BPL/LPL catalytic domain in the interval 32–207 (SESHDELWIV…TFSQLLGYQH (176 aa)). Substrate-binding positions include 71–78 (RGGQVTYH), 138–140 (SLG), and 151–153 (GLA). The active-site Acyl-thioester intermediate is the Cys-169.

The protein belongs to the LipB family.

Its subcellular location is the cytoplasm. It catalyses the reaction octanoyl-[ACP] + L-lysyl-[protein] = N(6)-octanoyl-L-lysyl-[protein] + holo-[ACP] + H(+). It participates in protein modification; protein lipoylation via endogenous pathway; protein N(6)-(lipoyl)lysine from octanoyl-[acyl-carrier-protein]: step 1/2. Catalyzes the transfer of endogenously produced octanoic acid from octanoyl-acyl-carrier-protein onto the lipoyl domains of lipoate-dependent enzymes. Lipoyl-ACP can also act as a substrate although octanoyl-ACP is likely to be the physiological substrate. This chain is Octanoyltransferase, found in Shewanella baltica (strain OS155 / ATCC BAA-1091).